A 167-amino-acid polypeptide reads, in one-letter code: SsrA-binding protein (167 aa).

Positions Q139–R158 are enriched in basic and acidic residues. The segment at Q139–A167 is disordered.

The protein belongs to the SmpB family.

The protein localises to the cytoplasm. Its function is as follows. Required for rescue of stalled ribosomes mediated by trans-translation. Binds to transfer-messenger RNA (tmRNA), required for stable association of tmRNA with ribosomes. tmRNA and SmpB together mimic tRNA shape, replacing the anticodon stem-loop with SmpB. tmRNA is encoded by the ssrA gene; the 2 termini fold to resemble tRNA(Ala) and it encodes a 'tag peptide', a short internal open reading frame. During trans-translation Ala-aminoacylated tmRNA acts like a tRNA, entering the A-site of stalled ribosomes, displacing the stalled mRNA. The ribosome then switches to translate the ORF on the tmRNA; the nascent peptide is terminated with the 'tag peptide' encoded by the tmRNA and targeted for degradation. The ribosome is freed to recommence translation, which seems to be the essential function of trans-translation. This chain is SsrA-binding protein, found in Xanthomonas oryzae pv. oryzae (strain PXO99A).